Here is a 1518-residue protein sequence, read N- to C-terminus: MTLSRGPYSELDKMSLFQDLKLKRRKIDSRCSSDGESIADTSTSSPDLLAPMSPKLCDSGSAGASLGASLPLPLALPLPMALPLPMSLPLPLTAASSAVTVSLAAVVAAVAETGGAGAGGAGTAVTASGAGPCVSTSSTTAAAATSSTSSLSSSSSSSSSTSSSTSSASPTAGASSTATCPASSSSSSGNGSGGKSGSIKQEHTEIHSSSSAISAAAASTVMSPPPAEATRSSPATPEGGGPAGDGSGATGGGNTSGGSTAGVAINEHQNNGNGSGGSSRASPDSLEEKPSTTTTTGRPTLTPTNGVLSSASAGTGISTGSSAKLSEAGMSVIRSVKEERLLNVSSKMLVFHQQREQETKAVAAAAAAAAAGHVTVLVTPSRIKSEPPPPASPSSTSSTQRERERERDRERDRERERERDRDREREREQSISSSQQHLSRVSASPPTQLSHGSLGPNIVQTHHLHQQLTQPLTLRKSSPPTEHLLSQSMQHLTQQQAIHLHHLLGQQQQQQQASHPQQQQQQQHSPHSLVRVKKEPNVGQRHLSPHHQQQSPLLQHHQQQQQQQQQQQQHLHQQQQQQQHHQQQPQALALMHPASLALRNSNRDAAILFRVKSEVHQQVAAGLPHLMQSAGGAAAAAAAAVAAQRMVCFSNARINGVKPEVIGGPLGNLRPVGVGGGNGSGSVQCPSPHPSSSSSSSQLSPQTPSQTPPRGTPTVIMGESCGVRTMVWGYEPPPPSAGQSHGQHPQQQQQSPHHQPQQQQQQQQQQSQQQQQQQQQQSLGQQQHCLSSPSAGSLTPSSSSGGGSVSGGGVGGPLTPSSVAPQNNEEAAQLLLSLGQTRIQDMRSRPHPFRTPHALNMERLWAGDYSQLPPGQLQALNLSAQQQQWGSSNSTGLGGVGGGMGGRNLEAPHEPTDEDEQPLVCMICEDKATGLHYGIITCEGCKGFFKRTVQNRRVYTCVADGTCEITKAQRNRCQYCRFKKCIEQGMVLQAVREDRMPGGRNSGAVYNLYKVKYKKHKKTNQKQQQQAAQQQQQQAAAQQQHQQQQQHQQHQQHQQQQLHSPLHHHHHQGHQSHHAQQQHHPQLSPHHLLSPQQQQLAAAVAAAAQHQQQQQQQQQQQQQAKLMGGVVDMKPMFLGPALKPELLQAPPMHSPAQQQQQQQQQQQQQQASPHLSLSSPHQQQQQQQGQHQNHHQQQGGGGGGAGGGAQLPPHLVNGTILKTALTNPSEIVHLRHRLDSAVSSSKDRQISYEHALGMIQTLIDCDAMEDIATLPHFSEFLEDKSEISEKLCNIGDSIVHKLVSWTKKLPFYLEIPVEIHTKLLTDKWHEILILTTAAYQALHGKRRGEGGGSRHGSPASTPLSTPTGTPLSTPIPSPAQPLHKDDPEFVSEVNSHLSTLQTCLTTLMGQPIAMEQLKLDVGHMVDKMTQITIMFRRIKLKMEEYVCLKVYILLNKEVELESIQERYVQVLRSYLQNSSPQNPQARLSELLSHIPEIQAAASLLLESKMFYVPFVLNSASIR.

5 disordered regions span residues 30–50, 145–327, 380–587, 672–820, and 887–913; these read RCSS…DLLA, TSST…KLSE, PSRI…QPQA, VGVG…SSVA, and SSNS…EPTD. The span at 34-46 shows a compositional bias: polar residues; sequence DGESIADTSTSSP. Low complexity-rich tracts occupy residues 145 to 189 and 208 to 219; these read TSST…SSSG and SSSSAISAAAAS. Over residues 238–260 the composition is skewed to gly residues; that stretch reads EGGGPAGDGSGATGGGNTSGGST. The segment covering 291 to 323 has biased composition (low complexity); the sequence is STTTTTGRPTLTPTNGVLSSASAGTGISTGSSA. A compositionally biased stretch (basic and acidic residues) spans 400–429; sequence QRERERERDRERDRERERERDRDREREREQ. Composition is skewed to polar residues over residues 430-451 and 475-489; these read SISS…QLSH and RKSS…SQSM. Composition is skewed to low complexity over residues 490–529, 546–586, 681–705, and 738–799; these read QHLT…PHSL, HHQQ…QQPQ, GSVQ…QTPS, and GQSH…PSSS. Gly residues-rich tracts occupy residues 800–812 and 892–902; these read SGGG…GVGG and GLGGVGGGMGG. Residues 918–993 constitute a DNA-binding region (nuclear receptor); that stretch reads PLVCMICEDK…QGMVLQAVRE (76 aa). 2 NR C4-type zinc fingers span residues 921–941 and 957–976; these read CMIC…CEGC and CVAD…CQYC. Disordered stretches follow at residues 1015–1101, 1142–1210, and 1341–1371; these read KHKK…AAVA, LLQA…LPPH, and KRRG…STPI. Over residues 1021-1060 the composition is skewed to low complexity; it reads QKQQQQAAQQQQQQAAAQQQHQQQQQHQQHQQHQQQQLHS. Basic residues predominate over residues 1061-1077; the sequence is PLHHHHHQGHQSHHAQQ. 2 stretches are compositionally biased toward low complexity: residues 1078–1101 and 1144–1193; these read QHHP…AAVA and QAPP…HHQQ. The span at 1194 to 1205 shows a compositional bias: gly residues; sequence QGGGGGGAGGGA. The region spanning 1250-1518 is the NR LBD domain; sequence HALGMIQTLI…PFVLNSASIR (269 aa). The segment covering 1351–1368 has biased composition (low complexity); sequence HGSPASTPLSTPTGTPLS.

This sequence belongs to the nuclear hormone receptor family. NR1 subfamily. In terms of tissue distribution, during L2 and L3 stages, strong constitutive expression is seen in the ring gland. Lower expression is detected in specific neurons of the central nervous system (CNS) (at protein level).

The protein localises to the nucleus. Coordinates growth and maturation by mediating endocrine responses to the attainment of critical weight during larval development. Plays a central role in the genetic cascades triggered by the steroid hormone ecdysone at the onset of metamorphosis, acting as both a repressor of the early ecdysone-induced regulatory genes and an inducer of the ftz-f1 midprepupal competence factor. The chain is Hormone receptor 4 (Hr4) from Drosophila melanogaster (Fruit fly).